We begin with the raw amino-acid sequence, 244 residues long: Cobalt transport protein CbiM (244 aa).

The signal sequence occupies residues 1–28 (MKKLWKFIPFVLMGVIYFTLTNPESAHA). The next 6 helical transmembrane spans lie at 37–57 (PVKWAVFWLIVFIPFLVLGLI), 71–91 (LLLALCAAFIFVLSALKIPSV), 103–123 (LATVMFGPLVVSVLGVIVLLF), 135–155 (TLGANAMSMAVIGPMVGFVVY), 166–186 (SVSIFLCAMTADLATYFTTSV), and 206–226 (FMAIFCVTQVPIAIAEGLLTV).

The protein belongs to the CbiM family. As to quaternary structure, forms an energy-coupling factor (ECF) transporter complex composed of an ATP-binding protein (A component, CbiO), a transmembrane protein (T component, CbiQ) and 2 possible substrate-capture proteins (S components, CbiM and CbiN) of unknown stoichimetry.

The protein localises to the cell membrane. It participates in cofactor biosynthesis; adenosylcobalamin biosynthesis. Functionally, part of the energy-coupling factor (ECF) transporter complex CbiMNOQ involved in cobalt import. The chain is Cobalt transport protein CbiM from Listeria seeligeri serovar 1/2b (strain ATCC 35967 / DSM 20751 / CCM 3970 / CCUG 15530 / CIP 100100 / LMG 11386 / NCTC 11856 / SLCC 3954 / 1120).